A 485-amino-acid chain; its full sequence is Noelin (485 aa).

The signal sequence occupies residues 1-16; the sequence is MSVPLLKIGVVLSTMA. N-linked (GlcNAc...) asparagine glycans are attached at residues Asn-33, Asn-103, Asn-187, Asn-288, Asn-307, Asn-394, Asn-431, and Asn-473. The stretch at 87 to 225 forms a coiled coil; that stretch reads RDARTKQLRQ…ERLRACMQKL (139 aa). The region spanning 226–478 is the Olfactomedin-like domain; that stretch reads ACGKLTGISD…QILYNVTLFH (253 aa). The cysteines at positions 227 and 409 are disulfide-linked.

As to quaternary structure, homotetramer; disulfide-linked. Dimer of dimers, giving rise to a V-shaped homotretramer. Component of the AMPAR complex. Post-translationally, glycosylated.

It is found in the secreted. The protein resides in the synapse. Its subcellular location is the endoplasmic reticulum. The protein localises to the cell projection. It localises to the axon. It is found in the perikaryon. Its function is as follows. Contributes to the regulation of axonal growth. May play an important role in regulating the production of neural crest cells by the neural tube. In Gallus gallus (Chicken), this protein is Noelin (OLFM1).